Here is a 294-residue protein sequence, read N- to C-terminus: MSELITTPVETTAKAELVSLAKLGEMRTHVGMVKRYWNPKMGFFIEPERKHNNDHFVLELQRQSLQTAYNYVKEVAQNNGQILFVGTKNDYVKKLVNNIAKRVDVAFITQRWLGGTLTNFKTLSISINKLNKLVEKQAENAADLTKKENLMLSREIERLEKFFGGVKSLKRLPNLLIVDDPVYEKNAVAEANILRIPVVALCNTNTNPELVDFIIPANNHQPQSTCLLMNLLADAVAEAKAMPTMFAYKPDEEIQIEIPQKQEAPRQVVNRANSKQITSQRLNITRNPEVLTRE.

The protein belongs to the universal ribosomal protein uS2 family.

The polypeptide is Small ribosomal subunit protein uS2 (rpsB) (Mycoplasma pneumoniae (strain ATCC 29342 / M129 / Subtype 1) (Mycoplasmoides pneumoniae)).